The sequence spans 270 residues: Malonyl-[acyl-carrier protein] O-methyltransferase (270 aa).

It belongs to the methyltransferase superfamily.

The catalysed reaction is malonyl-[ACP] + S-adenosyl-L-methionine = malonyl-[ACP] methyl ester + S-adenosyl-L-homocysteine. Its pathway is cofactor biosynthesis; biotin biosynthesis. Converts the free carboxyl group of a malonyl-thioester to its methyl ester by transfer of a methyl group from S-adenosyl-L-methionine (SAM). It allows to synthesize pimeloyl-ACP via the fatty acid synthetic pathway. The polypeptide is Malonyl-[acyl-carrier protein] O-methyltransferase (Magnetococcus marinus (strain ATCC BAA-1437 / JCM 17883 / MC-1)).